The following is a 500-amino-acid chain: AMP phosphorylase (500 aa).

AMP contacts are provided by residues G166, 192 to 197 (SRAVTS), and T201. Catalysis depends on D254, which acts as the Proton donor. Positions 262 and 286 each coordinate AMP.

This sequence belongs to the thymidine/pyrimidine-nucleoside phosphorylase family. Type 2 subfamily.

It catalyses the reaction AMP + phosphate = alpha-D-ribose 1,5-bisphosphate + adenine. The enzyme catalyses CMP + phosphate = cytosine + alpha-D-ribose 1,5-bisphosphate. The catalysed reaction is UMP + phosphate = alpha-D-ribose 1,5-bisphosphate + uracil. Its function is as follows. Catalyzes the conversion of AMP and phosphate to adenine and ribose 1,5-bisphosphate (R15P). Exhibits phosphorylase activity toward CMP and UMP in addition to AMP. Functions in an archaeal AMP degradation pathway, together with R15P isomerase and RubisCO. This chain is AMP phosphorylase (deoA), found in Natronomonas pharaonis (strain ATCC 35678 / DSM 2160 / CIP 103997 / JCM 8858 / NBRC 14720 / NCIMB 2260 / Gabara) (Halobacterium pharaonis).